A 742-amino-acid polypeptide reads, in one-letter code: Dynein axonemal intermediate chain 4 (742 aa).

WD repeat units lie at residues 462–502 (HCEC…DFPV), 511–559 (KHTS…DCND), 631–671 (GHKG…PILT), and 674–713 (NTTNAVYDIMWSPSSALMFGAVSENRVEIWDLGVSIIDPV).

In terms of assembly, part of the multisubunit axonemal dynein complex formed at least of two heavy chains and a number of intermediate and light chains. Associated with axonemal dynein subunits such as, DNAH2, DNAI3, and DYNLT1.

Its subcellular location is the cytoplasm. The protein resides in the cytoskeleton. It localises to the flagellum axoneme. The protein localises to the cilium axoneme. It is found in the dynein axonemal particle. Functionally, plays a critical role in the assembly of axonemal dynein complex, thereby playing a role in ciliary motility. In Xenopus laevis (African clawed frog), this protein is Dynein axonemal intermediate chain 4.